The sequence spans 547 residues: Kelch repeat and BTB domain-containing protein 2 (547 aa).

The 70-residue stretch at 20 to 89 folds into the BTB domain; it reads CDVIITIGDG…LYNRHISSMN (70 aa). 3 Kelch repeats span residues 295–342, 343–389, and 391–454; these read DIII…VIDD, TIYA…VLDQ, and IYII…SHKD.

Interacts (via BTB domain) with host CUL3.

The protein localises to the host cytoplasm. Functionally, probable substrate-specific adapter of CUL3-containing E3 ubiquitin-protein ligases which mediate the ubiquitination and subsequent proteasomal degradation of host target proteins. The protein is Kelch repeat and BTB domain-containing protein 2 (KBTB2) of Bos taurus (Bovine).